The primary structure comprises 560 residues: Kinesin light chain 1 (560 aa).

Residues 31-99 (VIQGLEALKN…MALSNHLNAV (69 aa)) adopt a coiled-coil conformation. Over residues 155 to 176 (KKYDDDISPSEDKDTDSTKEPL) the composition is skewed to basic and acidic residues. The tract at residues 155-203 (KKYDDDISPSEDKDTDSTKEPLDDLFPNDEDDPGQGIQQQHSSAAAAAQ) is disordered. Phosphoserine is present on serine 162. The span at 192 to 203 (QQQHSSAAAAAQ) shows a compositional bias: low complexity. TPR repeat units follow at residues 213-246 (LRTLHNLVIQYASQGRYEVAVPLCKQALEDLEKT), 255-288 (ATMLNILALVYRDQNKYKDAANLLNDALAIREKT), 297-330 (AATLNNLAVLYGKRGKYKEAEPLCKRALEIREKV), 339-372 (AKQLNNLALLCQNQGKYEEVEYYYQRALEIYQTK), and 381-414 (AKTKNNLASCYLKQGKFKQAETLYKEILTRAHER). Residue tyrosine 449 is modified to Phosphotyrosine. Serine 460 is subject to Phosphoserine. One copy of the TPR 6 repeat lies at 464–497 (TTTLKNLGALYRRQGKFEAAETLEEAAMRSRKQG). Residues serine 521 and serine 524 each carry the phosphoserine; by AMPK modification.

Belongs to the kinesin light chain family. As to quaternary structure, oligomeric complex composed of two heavy chains and two light chains. Interacts with SPAG9. Interacts with ATCAY; may link mitochondria to KLC1 and regulate mitochondria localization into neuron projections. Interacts (via TPR repeats) with TOR1A; the interaction associates TOR1A with the kinesin oligomeric complex. Interacts with BORCS5. Interacts with MAPK8IP3/JIP3 and NTRK2/TRKB; interaction with NTRK2/TRKB is mediated by MAPK8IP3/JIP3. Interacts with CLSTN1; phosphorylation at Ser-460 inhibits interaction with CLSTN1. Post-translationally, phosphorylation at Ser-460 by ERK inhibits interaction with CLSTN1 and localization to cytoplasmic vesicles.

The protein resides in the cell projection. It is found in the growth cone. Its subcellular location is the cytoplasmic vesicle. The protein localises to the cytoplasm. It localises to the cytoskeleton. Functionally, kinesin is a microtubule-associated force-producing protein that may play a role in organelle transport. The light chain may function in coupling of cargo to the heavy chain or in the modulation of its ATPase activity. This Pongo abelii (Sumatran orangutan) protein is Kinesin light chain 1 (KLC1).